Here is a 92-residue protein sequence, read N- to C-terminus: DNA-directed RNA polymerase subunit omega (92 aa).

The protein belongs to the RNA polymerase subunit omega family. The RNAP catalytic core consists of 2 alpha, 1 beta, 1 beta' and 1 omega subunit. When a sigma factor is associated with the core the holoenzyme is formed, which can initiate transcription.

The catalysed reaction is RNA(n) + a ribonucleoside 5'-triphosphate = RNA(n+1) + diphosphate. Functionally, promotes RNA polymerase assembly. Latches the N- and C-terminal regions of the beta' subunit thereby facilitating its interaction with the beta and alpha subunits. In Acinetobacter baumannii (strain AB307-0294), this protein is DNA-directed RNA polymerase subunit omega.